The sequence spans 291 residues: ATP synthase gamma chain (291 aa).

This sequence belongs to the ATPase gamma chain family. In terms of assembly, F-type ATPases have 2 components, CF(1) - the catalytic core - and CF(0) - the membrane proton channel. CF(1) has five subunits: alpha(3), beta(3), gamma(1), delta(1), epsilon(1). CF(0) has three main subunits: a, b and c.

The protein localises to the cell inner membrane. In terms of biological role, produces ATP from ADP in the presence of a proton gradient across the membrane. The gamma chain is believed to be important in regulating ATPase activity and the flow of protons through the CF(0) complex. This chain is ATP synthase gamma chain, found in Aquifex aeolicus (strain VF5).